Reading from the N-terminus, the 217-residue chain is MPKKFQGENSKSAAARARRAEAKAAADAKKQKELEDAYWKDEDKHVMRKEQRKEEKEKRRLEQLERKKETQRLLEEEDSRLKGGKAPRVAPAKVTRAQIEDSLRREQRAEPVEKAKSHLELPLEENLNRRLQEEGSVEARTVEDAIAVLSVAEEADRHPERRMRAAFTAFEEVQLPRLKQENPNMRLSQLKQLLKKEWLRSPDNPMNQRALPFNAPK.

The segment at Met1–Glu120 is disordered. Residues Ala15–Lys82 are a coiled coil. Composition is skewed to basic and acidic residues over residues Arg18 to Leu74 and Gln98 to Glu120. Ser136 and Ser188 each carry phosphoserine.

Belongs to the CCDC124 family. Associates with translationally inactive ribosomes in the nonrotated state. Interacts with RASGEF1B.

It is found in the cytoplasm. It localises to the cytoskeleton. The protein localises to the microtubule organizing center. The protein resides in the centrosome. Its subcellular location is the midbody. Ribosome-binding protein involved in ribosome hibernation: associates with translationally inactive ribosomes and stabilizes the nonrotated conformation of the 80S ribosome, thereby promoting ribosome preservation and storage. Also required for proper progression of late cytokinetic stages. This chain is Coiled-coil domain-containing protein 124 (Ccdc124), found in Mus musculus (Mouse).